The chain runs to 138 residues: Acidic phospholipase A2 PL1 (138 aa).

The N-terminal stretch at 1 to 16 is a signal peptide; sequence MRALWIVAVCLIGAEG. 7 disulfides stabilise this stretch: Cys42-Cys131, Cys44-Cys60, Cys59-Cys111, Cys65-Cys138, Cys66-Cys104, Cys73-Cys97, and Cys91-Cys102. Ca(2+)-binding residues include Tyr43, Gly45, and Gly47. His63 is a catalytic residue. Asp64 serves as a coordination point for Ca(2+). Residue Asp105 is part of the active site.

This sequence belongs to the phospholipase A2 family. Group II subfamily. D49 sub-subfamily. It depends on Ca(2+) as a cofactor. As to expression, expressed by the venom gland.

It is found in the secreted. The enzyme catalyses a 1,2-diacyl-sn-glycero-3-phosphocholine + H2O = a 1-acyl-sn-glycero-3-phosphocholine + a fatty acid + H(+). Functionally, PLA2 catalyzes the calcium-dependent hydrolysis of the 2-acyl groups in 3-sn-phosphoglycerides. In Vipera renardi (Steppe viper), this protein is Acidic phospholipase A2 PL1.